Here is an 81-residue protein sequence, read N- to C-terminus: Large ribosomal subunit protein eL31 (81 aa).

Belongs to the eukaryotic ribosomal protein eL31 family.

This Methanothermobacter thermautotrophicus (strain ATCC 29096 / DSM 1053 / JCM 10044 / NBRC 100330 / Delta H) (Methanobacterium thermoautotrophicum) protein is Large ribosomal subunit protein eL31 (rpl31e).